Here is a 211-residue protein sequence, read N- to C-terminus: Glycerol-3-phosphate acyltransferase (211 aa).

6 helical membrane-spanning segments follow: residues 10–30 (FYTWSIFLMSYLIGSIPFGLL), 63–83 (TLTLLCDILKGTVVVLVIKFL), 90–110 (SIIISLVGFFAFLGHLFPIWL), 126–146 (LGYYWPAAIVFIIVWIMFFIL), 152–172 (LSALIAVIITPIFVYFSYPHL), and 174–194 (AHCILVMMSIFVIIKHHANIA).

The protein belongs to the PlsY family. As to quaternary structure, probably interacts with PlsX.

Its subcellular location is the cell inner membrane. The catalysed reaction is an acyl phosphate + sn-glycerol 3-phosphate = a 1-acyl-sn-glycero-3-phosphate + phosphate. It functions in the pathway lipid metabolism; phospholipid metabolism. In terms of biological role, catalyzes the transfer of an acyl group from acyl-phosphate (acyl-PO(4)) to glycerol-3-phosphate (G3P) to form lysophosphatidic acid (LPA). This enzyme utilizes acyl-phosphate as fatty acyl donor, but not acyl-CoA or acyl-ACP. The protein is Glycerol-3-phosphate acyltransferase of Bartonella quintana (strain Toulouse) (Rochalimaea quintana).